The following is a 215-amino-acid chain: Ribose-5-phosphate isomerase A (215 aa).

Substrate is bound by residues 26-29 (TGST), 79-82 (DGAD), and 92-95 (KGGG). Residue glutamate 101 is the Proton acceptor of the active site. Substrate is bound at residue lysine 119.

This sequence belongs to the ribose 5-phosphate isomerase family. Homodimer.

It catalyses the reaction aldehydo-D-ribose 5-phosphate = D-ribulose 5-phosphate. Its pathway is carbohydrate degradation; pentose phosphate pathway; D-ribose 5-phosphate from D-ribulose 5-phosphate (non-oxidative stage): step 1/1. In terms of biological role, catalyzes the reversible conversion of ribose-5-phosphate to ribulose 5-phosphate. This Xanthomonas oryzae pv. oryzae (strain MAFF 311018) protein is Ribose-5-phosphate isomerase A.